A 169-amino-acid chain; its full sequence is Peptide methionine sulfoxide reductase MsrA (169 aa).

Residue Cys10 is part of the active site.

This sequence belongs to the MsrA Met sulfoxide reductase family.

The enzyme catalyses L-methionyl-[protein] + [thioredoxin]-disulfide + H2O = L-methionyl-(S)-S-oxide-[protein] + [thioredoxin]-dithiol. It catalyses the reaction [thioredoxin]-disulfide + L-methionine + H2O = L-methionine (S)-S-oxide + [thioredoxin]-dithiol. Functionally, has an important function as a repair enzyme for proteins that have been inactivated by oxidation. Catalyzes the reversible oxidation-reduction of methionine sulfoxide in proteins to methionine. The polypeptide is Peptide methionine sulfoxide reductase MsrA (Streptococcus pyogenes serotype M3 (strain ATCC BAA-595 / MGAS315)).